Reading from the N-terminus, the 325-residue chain is L-lactate dehydrogenase 1 (325 aa).

NAD(+)-binding positions include valine 17, aspartate 38, lysine 43, tyrosine 68, and 82–83; that span reads GA. Residues glutamine 85, arginine 91, and 123–126 contribute to the substrate site; that span reads NPVD. NAD(+) is bound by residues 121–123 and serine 146; that span reads AAN. Residue 151 to 154 coordinates substrate; that stretch reads DTAR. Beta-D-fructose 1,6-bisphosphate-binding residues include arginine 156 and histidine 171. Histidine 178 acts as the Proton acceptor in catalysis. Phosphotyrosine is present on tyrosine 223. Threonine 232 contributes to the substrate binding site.

This sequence belongs to the LDH/MDH superfamily. LDH family. Homotetramer.

It is found in the cytoplasm. The catalysed reaction is (S)-lactate + NAD(+) = pyruvate + NADH + H(+). The protein operates within fermentation; pyruvate fermentation to lactate; (S)-lactate from pyruvate: step 1/1. Its activity is regulated as follows. Allosterically activated by fructose 1,6-bisphosphate (FBP). Its function is as follows. Catalyzes the conversion of lactate to pyruvate. The sequence is that of L-lactate dehydrogenase 1 from Lactococcus lactis subsp. lactis (strain IL1403) (Streptococcus lactis).